A 938-amino-acid polypeptide reads, in one-letter code: MSDYKNTLNLPETGFPMRGDLAKREPDMLKRWYEQDLYGIIRAAKKGKKTFILHDGPPYANGNIHIGHSVNKILKDIIVKSKGMAGYDSPYIPGWDCHGLPIELKVEQLIGKPGEKVSAAEFRTACRKYAAEQVEGQKKDFIRLGVLGDWDHPYLTMDFKTEANIIRALSKIIDNGHLHKGAKPVHWCTDCGSSLAEAEVEYYDKTSQSIDVRFNAVDTATVAAKFGVSVVNGPISLVIWTTTPWTLPANRAISLNAEYLYQLVQVEGECLILAADLVESVMKRAGITQWAVLGSCTGSDLELLRFTHPFMGFDVPAILGEHVTLDAGTGAVHTAPGHGPDDFVIGQKYGLEVANPVGPNGCYLAGTYPTLDGLFVFKANDVVVELLREKGALLHVEKLLHSYPCCWRHKTPIIFRATPQWFISMDQKGLRKQSLQEIKDVQWIPDWGQARIETMVANRPDWCISRQRTWGVPMSLFVHKETEQLHPRSIELMEEVAKRVEQDGIQAWWDLDPAEILGADAADYVKVPDTLDVWFDSGSTHSSVVDARPEFGGHSPDMYLEGSDQHRGWFMSSLMIATAMKGKAPYRQVLTHGFTVDGQGRKMSKSIGNTISPQDVMNKLGGDILRLWVASTDYTGEIAVSDEILKRSADSYRRIRNTARFLLANLNGFDPAQHQVKPEEMVVVDRWAVGRAQAAQAEIMEAYENYDFHLVVQRLMQFCSVEMGSFYLDIIKDRQYTAKGDGIARRSCQTALFHIAEALVRWMAPIMSFTADEIWNHLPGERQQYVFTEEWYDGLFGLAGNESMNDTFWAELLKVRGEVNKVLEQARSDKRIGGSLEAAVTLYAEPELAARLNSLQDELRFVLLTSAAKVAAYADAGNDAQQSELIAGLKITFNKADGEKCPRCWHYTQDVGLVAEHAELCGRCVTNVAGDGEERKFA.

A 'HIGH' region motif is present at residues 58 to 68 (PYANGNIHIGH). An L-isoleucyl-5'-AMP-binding site is contributed by Glu561. The short motif at 602 to 606 (KMSKS) is the 'KMSKS' region element. ATP is bound at residue Lys605. Zn(2+) contacts are provided by Cys901, Cys904, Cys921, and Cys924.

Belongs to the class-I aminoacyl-tRNA synthetase family. IleS type 1 subfamily. In terms of assembly, monomer. Zn(2+) serves as cofactor.

Its subcellular location is the cytoplasm. The catalysed reaction is tRNA(Ile) + L-isoleucine + ATP = L-isoleucyl-tRNA(Ile) + AMP + diphosphate. Catalyzes the attachment of isoleucine to tRNA(Ile). As IleRS can inadvertently accommodate and process structurally similar amino acids such as valine, to avoid such errors it has two additional distinct tRNA(Ile)-dependent editing activities. One activity is designated as 'pretransfer' editing and involves the hydrolysis of activated Val-AMP. The other activity is designated 'posttransfer' editing and involves deacylation of mischarged Val-tRNA(Ile). In Yersinia pseudotuberculosis serotype O:1b (strain IP 31758), this protein is Isoleucine--tRNA ligase.